Here is a 122-residue protein sequence, read N- to C-terminus: Fluoride-specific ion channel FluC (122 aa).

The next 4 helical transmembrane spans lie at 4 to 24 (ILLI…VSGI), 36 to 56 (LIVN…SLFG), 65 to 85 (FIIT…YESF), and 100 to 120 (ILLN…ASMF). Residues glycine 72 and threonine 75 each coordinate Na(+).

This sequence belongs to the fluoride channel Fluc/FEX (TC 1.A.43) family.

It localises to the cell membrane. It catalyses the reaction fluoride(in) = fluoride(out). Na(+) is not transported, but it plays an essential structural role and its presence is essential for fluoride channel function. In terms of biological role, fluoride-specific ion channel. Important for reducing fluoride concentration in the cell, thus reducing its toxicity. The chain is Fluoride-specific ion channel FluC from Methanococcus maripaludis (strain DSM 14266 / JCM 13030 / NBRC 101832 / S2 / LL).